The primary structure comprises 129 residues: Large ribosomal subunit protein bL12c (129 aa).

Positions 101 to 123 (KPIKEGMSKADAEAGKKQLEEAG) are enriched in basic and acidic residues. The tract at residues 101–129 (KPIKEGMSKADAEAGKKQLEEAGAKATLK) is disordered.

This sequence belongs to the bacterial ribosomal protein bL12 family. As to quaternary structure, homodimer. Part of the ribosomal stalk of the 50S ribosomal subunit. Forms a multimeric L10(L12)X complex, where L10 forms an elongated spine to which 2 to 4 L12 dimers bind in a sequential fashion. Binds GTP-bound translation factors.

It localises to the plastid. The protein localises to the chloroplast. Its function is as follows. Forms part of the ribosomal stalk which helps the ribosome interact with GTP-bound translation factors. Is thus essential for accurate translation. In Guillardia theta (Cryptophyte), this protein is Large ribosomal subunit protein bL12c.